A 925-amino-acid chain; its full sequence is Bifunctional uridylyltransferase/uridylyl-removing enzyme (925 aa).

The interval 1-382 (MVLPTTKDAT…PPGAEVRRVP (382 aa)) is uridylyltransferase. Residues 383–738 (DSDDFIIDNN…VGFDEARGVT (356 aa)) are uridylyl-removing. In terms of domain architecture, HD spans 498–621 (VDEHLIRCIG…VQSVERMKLL (124 aa)). 2 consecutive ACT domains span residues 739-820 (ELTI…DVMP) and 849-925 (MIEV…NTAE).

It belongs to the GlnD family. Mg(2+) serves as cofactor.

The enzyme catalyses [protein-PII]-L-tyrosine + UTP = [protein-PII]-uridylyl-L-tyrosine + diphosphate. It catalyses the reaction [protein-PII]-uridylyl-L-tyrosine + H2O = [protein-PII]-L-tyrosine + UMP + H(+). Uridylyltransferase (UTase) activity is inhibited by glutamine, while glutamine activates uridylyl-removing (UR) activity. Functionally, modifies, by uridylylation and deuridylylation, the PII regulatory proteins (GlnB and homologs), in response to the nitrogen status of the cell that GlnD senses through the glutamine level. Under low glutamine levels, catalyzes the conversion of the PII proteins and UTP to PII-UMP and PPi, while under higher glutamine levels, GlnD hydrolyzes PII-UMP to PII and UMP (deuridylylation). Thus, controls uridylylation state and activity of the PII proteins, and plays an important role in the regulation of nitrogen assimilation and metabolism. In Nitrobacter winogradskyi (strain ATCC 25391 / DSM 10237 / CIP 104748 / NCIMB 11846 / Nb-255), this protein is Bifunctional uridylyltransferase/uridylyl-removing enzyme.